Reading from the N-terminus, the 101-residue chain is Protein SSXA1 (101 aa).

A KRAB-related domain is found at 19 to 83 (ETCQAFEDIS…ERVTKSVLSD (65 aa)). The segment at 73–101 (KERVTKSVLSDSDEVSSHESQDKRKNPVV) is disordered. Residues 87–101 (VSSHESQDKRKNPVV) show a composition bias toward basic and acidic residues.

Belongs to the SSX family. Specifically expressed in testis (at protein level). Not detected in other tissues tested (at protein level).

It is found in the nucleus. Functionally, could act as a modulator of transcription. This is Protein SSXA1 from Mus musculus (Mouse).